The following is a 78-amino-acid chain: Spermatid-specific protein T1 (78 aa).

Positions 1–21 are hydrophobic; the sequence is MKVAANSSKMLAEKLELMKGG. A disordered region spans residues 1-78; sequence MKVAANSSKM…YSRRRYRRRR (78 aa). Over residues 20-78 the composition is skewed to basic residues; sequence GGRRRRRRSRRRRRRSRRRSRSPYRRRYRRRRRRRRRRSRRRRYRRRRSYSRRRYRRRR.

Post-translationally, phosphorylation occurs at different degrees. The triphosphorylated form may be predominant in T1. SP1 appears to be phosphorylated in elongated spermatids, but dephosphorylated in mature sperm cells. Testis.

Its subcellular location is the nucleus. It is found in the chromosome. Its function is as follows. Cuttlefish spermiogenesis is characterized by a double nuclear protein transition: histones -&gt; spermatid-specific proteins (T1/T2) -&gt; protamines (SP1/SP2). The protamines compact sperm DNA into a highly condensed, stable and inactive complex. The protein is Spermatid-specific protein T1 of Sepia officinalis (Common cuttlefish).